The following is a 326-amino-acid chain: Undecaprenyl-phosphate 4-deoxy-4-formamido-L-arabinose transferase (326 aa).

2 consecutive transmembrane segments (helical) span residues 234-254 (LLSI…ILLI) and 269-289 (VFTL…GMGL).

This sequence belongs to the glycosyltransferase 2 family.

Its subcellular location is the cell inner membrane. It carries out the reaction UDP-4-deoxy-4-formamido-beta-L-arabinose + di-trans,octa-cis-undecaprenyl phosphate = 4-deoxy-4-formamido-alpha-L-arabinopyranosyl di-trans,octa-cis-undecaprenyl phosphate + UDP. It participates in glycolipid biosynthesis; 4-amino-4-deoxy-alpha-L-arabinose undecaprenyl phosphate biosynthesis; 4-amino-4-deoxy-alpha-L-arabinose undecaprenyl phosphate from UDP-4-deoxy-4-formamido-beta-L-arabinose and undecaprenyl phosphate: step 1/2. The protein operates within bacterial outer membrane biogenesis; lipopolysaccharide biosynthesis. Catalyzes the transfer of 4-deoxy-4-formamido-L-arabinose from UDP to undecaprenyl phosphate. The modified arabinose is attached to lipid A and is required for resistance to polymyxin and cationic antimicrobial peptides. In Aeromonas hydrophila subsp. hydrophila (strain ATCC 7966 / DSM 30187 / BCRC 13018 / CCUG 14551 / JCM 1027 / KCTC 2358 / NCIMB 9240 / NCTC 8049), this protein is Undecaprenyl-phosphate 4-deoxy-4-formamido-L-arabinose transferase.